The primary structure comprises 302 residues: Spermidine synthase (302 aa).

Residue M1 is modified to N-acetylmethionine. The region spanning 18–253 is the PABS domain; the sequence is EGWFRETCSL…GQIGFMLCSK (236 aa). Position 49 (Q49) interacts with S-adenosyl 3-(methylsulfanyl)propylamine. Residue Y79 participates in putrescine binding. S-adenosyl 3-(methylsulfanyl)propylamine contacts are provided by residues Q80, D104, E124, 155-156, and D173; that span reads DG. The active-site Proton acceptor is the D173. Residues 173–176 and Y241 contribute to the putrescine site; that span reads DSSD.

This sequence belongs to the spermidine/spermine synthase family. Homodimer or homotetramer.

It carries out the reaction S-adenosyl 3-(methylsulfanyl)propylamine + putrescine = S-methyl-5'-thioadenosine + spermidine + H(+). It participates in amine and polyamine biosynthesis; spermidine biosynthesis; spermidine from putrescine: step 1/1. With respect to regulation, the activity is thought to be regulated mainly by the availability of decarboxylated S-adenosylmethionine. Its function is as follows. Catalyzes the production of spermidine from putrescine and decarboxylated S-adenosylmethionine (dcSAM). Has a strong preference for putrescine as substrate, and has very low activity towards 1,3-diaminopropane. Has extremely low activity towards spermidine. The protein is Spermidine synthase (Srm) of Mus musculus (Mouse).